The chain runs to 176 residues: Large ribosomal subunit protein uL6 (176 aa).

The segment covering 151 to 170 (RPPEPYKGKGVRYADEQVRR) has biased composition (basic and acidic residues). The tract at residues 151–176 (RPPEPYKGKGVRYADEQVRRKEAKKK) is disordered.

Belongs to the universal ribosomal protein uL6 family. In terms of assembly, part of the 50S ribosomal subunit.

Functionally, this protein binds to the 23S rRNA, and is important in its secondary structure. It is located near the subunit interface in the base of the L7/L12 stalk, and near the tRNA binding site of the peptidyltransferase center. This is Large ribosomal subunit protein uL6 from Shewanella loihica (strain ATCC BAA-1088 / PV-4).